The primary structure comprises 127 residues: Large ribosomal subunit protein bL20 (127 aa).

This sequence belongs to the bacterial ribosomal protein bL20 family.

Binds directly to 23S ribosomal RNA and is necessary for the in vitro assembly process of the 50S ribosomal subunit. It is not involved in the protein synthesizing functions of that subunit. The protein is Large ribosomal subunit protein bL20 (rplT) of Mycoplasma pneumoniae (strain ATCC 29342 / M129 / Subtype 1) (Mycoplasmoides pneumoniae).